Consider the following 399-residue polypeptide: Sphingosine-1-phosphate phosphatase 2 (399 aa).

Helical transmembrane passes span 88–108 (YLFQ…FLPF), 121–141 (LIII…VLKW), 160–180 (YGMP…LLIS), and 185–205 (YQYP…LVCL). The segment at 136–144 (KDVLKWPRP) is phosphatase sequence motif I. Residues 163–166 (PSTH) form a phosphatase sequence motif II region. His166 functions as the Proton donor in the catalytic mechanism. A phosphatase sequence motif III region spans residues 206-217 (SRLYTGMHTVLD). His213 (nucleophile) is an active-site residue. The next 5 helical transmembrane spans lie at 219 to 239 (LGGV…WTFI), 247 to 267 (PLFP…YPVS), 280 to 300 (ILAA…FQLV), 318 to 338 (TYML…ILLV), and 371 to 391 (VPYK…FVPM).

This sequence belongs to the type 2 lipid phosphate phosphatase family. In terms of tissue distribution, expressed strongly in kidney and heart, followed by brain, colon, small intestine and lung. Not detected in skeletal muscle, thymus, spleen, liver, placenta, and peripheral blood leukocytes.

The protein resides in the endoplasmic reticulum membrane. The catalysed reaction is sphinganine 1-phosphate + H2O = sphinganine + phosphate. It carries out the reaction sphing-4-enine 1-phosphate + H2O = sphing-4-enine + phosphate. The enzyme catalyses (4R)-hydroxysphinganine 1-phosphate + H2O = (4R)-hydroxysphinganine + phosphate. Functionally, has specific phosphohydrolase activity towards sphingoid base 1-phosphates. Has high phosphohydrolase activity against dihydrosphingosine-1-phosphate and sphingosine-1-phosphate (S1P) in vitro. Sphingosine-1-phosphate phosphatase activity is needed for efficient recycling of sphingosine into the sphingolipid synthesis pathway. May play a role in attenuating intracellular sphingosine 1-phosphate (S1P) signaling. May play a role in pro-inflammatory signaling. Plays a role in the regulation of pancreatic islet beta-cell endoplasmic reticulum stress and proliferation. The polypeptide is Sphingosine-1-phosphate phosphatase 2 (Homo sapiens (Human)).